Consider the following 273-residue polypeptide: Tryptase (273 aa).

The N-terminal stretch at 1-18 (MLKLLLLTLPLLSSLVHA) is a signal peptide. The propeptide at 19-28 (APGPAMTREG) is activation peptide. In terms of domain architecture, Peptidase S1 spans 29–270 (IVGGQEAHGN…YLDWIHHYVP (242 aa)). N-linked (GlcNAc...) asparagine glycosylation occurs at Asn-49. Cys-57 and Cys-73 are oxidised to a cystine. Catalysis depends on charge relay system residues His-72 and Asp-119. Residue Asn-130 is glycosylated (N-linked (GlcNAc...) asparagine). 3 cysteine pairs are disulfide-bonded: Cys-153–Cys-228, Cys-186–Cys-209, and Cys-218–Cys-246. The Charge relay system role is filled by Ser-222.

It belongs to the peptidase S1 family. Tryptase subfamily.

The catalysed reaction is Preferential cleavage: Arg-|-Xaa, Lys-|-Xaa, but with more restricted specificity than trypsin.. In terms of biological role, tryptase is the major neutral protease present in mast cells and is secreted upon the coupled activation-degranulation response of this cell type. May play a role in innate immunity. This is Tryptase (Tpsab1) from Mus musculus (Mouse).